The chain runs to 95 residues: Co-chaperonin GroES (95 aa).

It belongs to the GroES chaperonin family. In terms of assembly, heptamer of 7 subunits arranged in a ring. Interacts with the chaperonin GroEL.

The protein localises to the cytoplasm. In terms of biological role, together with the chaperonin GroEL, plays an essential role in assisting protein folding. The GroEL-GroES system forms a nano-cage that allows encapsulation of the non-native substrate proteins and provides a physical environment optimized to promote and accelerate protein folding. GroES binds to the apical surface of the GroEL ring, thereby capping the opening of the GroEL channel. In Clostridium acetobutylicum (strain ATCC 824 / DSM 792 / JCM 1419 / IAM 19013 / LMG 5710 / NBRC 13948 / NRRL B-527 / VKM B-1787 / 2291 / W), this protein is Co-chaperonin GroES.